A 259-amino-acid chain; its full sequence is 5'-nucleotidase SurE (259 aa).

The a divalent metal cation site is built by Asp-8, Asp-9, Ser-40, and Asn-92.

It belongs to the SurE nucleotidase family. It depends on a divalent metal cation as a cofactor.

Its subcellular location is the cytoplasm. It carries out the reaction a ribonucleoside 5'-phosphate + H2O = a ribonucleoside + phosphate. Its function is as follows. Nucleotidase that shows phosphatase activity on nucleoside 5'-monophosphates. In Xanthomonas euvesicatoria pv. vesicatoria (strain 85-10) (Xanthomonas campestris pv. vesicatoria), this protein is 5'-nucleotidase SurE.